Reading from the N-terminus, the 361-residue chain is Chorismate synthase (361 aa).

Residues R48 and R54 each contribute to the NADP(+) site. Residues 125-127 (RSS), 238-239 (NA), G278, 293-297 (KPTSS), and R319 each bind FMN.

It belongs to the chorismate synthase family. In terms of assembly, homotetramer. Requires FMNH2 as cofactor.

It carries out the reaction 5-O-(1-carboxyvinyl)-3-phosphoshikimate = chorismate + phosphate. It functions in the pathway metabolic intermediate biosynthesis; chorismate biosynthesis; chorismate from D-erythrose 4-phosphate and phosphoenolpyruvate: step 7/7. In terms of biological role, catalyzes the anti-1,4-elimination of the C-3 phosphate and the C-6 proR hydrogen from 5-enolpyruvylshikimate-3-phosphate (EPSP) to yield chorismate, which is the branch point compound that serves as the starting substrate for the three terminal pathways of aromatic amino acid biosynthesis. This reaction introduces a second double bond into the aromatic ring system. The sequence is that of Chorismate synthase from Yersinia enterocolitica serotype O:8 / biotype 1B (strain NCTC 13174 / 8081).